We begin with the raw amino-acid sequence, 383 residues long: Transcription termination factor Rho (383 aa).

Residues 1–22 form a disordered region; the sequence is MTIETTTKKRPRAARPPRPRES. Positions 8–17 are enriched in basic residues; the sequence is KKRPRAARPP. A Rho RNA-BD domain is found at 26-93; that stretch reads LETVAGLLDV…AEVESVNGST (68 aa). Residues 132 to 137, 144 to 149, and Arg-175 contribute to the ATP site; these read GKGQRG and KAGKTM.

It belongs to the Rho family. In terms of assembly, homohexamer. The homohexamer assembles into an open ring structure.

Functionally, facilitates transcription termination by a mechanism that involves Rho binding to the nascent RNA, activation of Rho's RNA-dependent ATPase activity, and release of the mRNA from the DNA template. The sequence is that of Transcription termination factor Rho from Streptosporangium roseum (strain ATCC 12428 / DSM 43021 / JCM 3005 / KCTC 9067 / NCIMB 10171 / NRRL 2505 / NI 9100).